The chain runs to 55 residues: ATP synthase F(0) complex subunit 8 (55 aa).

A helical transmembrane segment spans residues 9–29 (WFFIMIMSWAVFLLLIQPKLL).

The protein belongs to the ATPase protein 8 family. Component of the ATP synthase complex composed at least of ATP5F1A/subunit alpha, ATP5F1B/subunit beta, ATP5MC1/subunit c (homooctomer), MT-ATP6/subunit a, MT-ATP8/subunit 8, ATP5ME/subunit e, ATP5MF/subunit f, ATP5MG/subunit g, ATP5MK/subunit k, ATP5MJ/subunit j, ATP5F1C/subunit gamma, ATP5F1D/subunit delta, ATP5F1E/subunit epsilon, ATP5PF/subunit F6, ATP5PB/subunit b, ATP5PD/subunit d, ATP5PO/subunit OSCP. ATP synthase complex consists of a soluble F(1) head domain (subunits alpha(3) and beta(3)) - the catalytic core - and a membrane F(0) domain - the membrane proton channel (subunits c, a, 8, e, f, g, k and j). These two domains are linked by a central stalk (subunits gamma, delta, and epsilon) rotating inside the F1 region and a stationary peripheral stalk (subunits F6, b, d, and OSCP).

Its subcellular location is the mitochondrion membrane. Its function is as follows. Subunit 8, of the mitochondrial membrane ATP synthase complex (F(1)F(0) ATP synthase or Complex V) that produces ATP from ADP in the presence of a proton gradient across the membrane which is generated by electron transport complexes of the respiratory chain. ATP synthase complex consist of a soluble F(1) head domain - the catalytic core - and a membrane F(1) domain - the membrane proton channel. These two domains are linked by a central stalk rotating inside the F(1) region and a stationary peripheral stalk. During catalysis, ATP synthesis in the catalytic domain of F(1) is coupled via a rotary mechanism of the central stalk subunits to proton translocation. In vivo, can only synthesize ATP although its ATP hydrolase activity can be activated artificially in vitro. Part of the complex F(0) domain. The sequence is that of ATP synthase F(0) complex subunit 8 from Rhea americana (Greater rhea).